A 142-amino-acid chain; its full sequence is Nucleoside diphosphate kinase (142 aa).

ATP-binding residues include Lys11, Phe59, Arg87, Thr93, Arg104, and Asn114. The active-site Pros-phosphohistidine intermediate is the His117.

It belongs to the NDK family. Homotetramer. It depends on Mg(2+) as a cofactor.

It localises to the cytoplasm. The catalysed reaction is a 2'-deoxyribonucleoside 5'-diphosphate + ATP = a 2'-deoxyribonucleoside 5'-triphosphate + ADP. It catalyses the reaction a ribonucleoside 5'-diphosphate + ATP = a ribonucleoside 5'-triphosphate + ADP. Functionally, major role in the synthesis of nucleoside triphosphates other than ATP. The ATP gamma phosphate is transferred to the NDP beta phosphate via a ping-pong mechanism, using a phosphorylated active-site intermediate. The sequence is that of Nucleoside diphosphate kinase from Photobacterium profundum (strain SS9).